We begin with the raw amino-acid sequence, 2419 residues long: Telomere-associated protein RIF1 (2419 aa).

Disordered regions lie at residues 1–24 and 373–408; these read MTAP…VPPG and SIPS…SPRG. Residues 373 to 385 show a composition bias toward polar residues; sequence SIPSPQGNSSRGS. Residues serine 385, serine 391, serine 779, serine 976, and serine 1005 each carry the phosphoserine modification. Threonine 1044 carries the post-translational modification Phosphothreonine. A compositionally biased stretch (low complexity) spans 1184-1198; sequence SSSTETSVVSSSSVS. 2 disordered regions span residues 1184–1594 and 1613–1637; these read SSST…QAVP and RVIL…EKSK. 2 stretches are compositionally biased toward polar residues: residues 1199–1217 and 1228–1255; these read NATF…QTFI and RPFS…TNTD. Position 1215 is a phosphothreonine (threonine 1215). 2 positions are modified to phosphoserine: serine 1231 and serine 1233. A compositionally biased stretch (basic and acidic residues) spans 1263-1272; that stretch reads REVTNSKSDS. Residues 1289 to 1302 show a composition bias toward polar residues; the sequence is AEQSVTKKSKPSLT. The segment covering 1323–1345 has biased composition (basic and acidic residues); that stretch reads HVSENDDHPSEATLEHKDGDPKP. 4 positions are modified to phosphoserine: serine 1407, serine 1439, serine 1457, and serine 1498. The segment covering 1416 to 1455 has biased composition (basic and acidic residues); the sequence is SQERESGQQKKERRKEEEKIISKSPLRIKDDKLPTQKLTD. Positions 1457 to 1467 are enriched in polar residues; sequence SPIQENLTEKG. A Phosphothreonine modification is found at threonine 1504. Residues 1507 to 1516 show a composition bias toward basic and acidic residues; the sequence is NLDKSSEKPL. Positions 1525–1537 are enriched in polar residues; it reads RRASQGLISAVEN. Residues serine 1528, serine 1538, serine 1540, serine 1542, and serine 1550 each carry the phosphoserine modification. The span at 1551–1560 shows a compositional bias: basic residues; that stretch reads RKKRSGKWKN. A phosphoserine mark is found at serine 1562 and serine 1565. Residues 1572-1581 are compositionally biased toward basic and acidic residues; that stretch reads EEKKAEEEVM. Residues serine 1680 and serine 1683 each carry the phosphoserine modification. Position 1780 is a phosphothreonine (threonine 1780). Serine 1784 carries the phosphoserine modification. The interval 1812–1836 is disordered; it reads ASEAVSEIQGPCSENHSPAEDPGLS. At serine 1842 the chain carries Phosphoserine. The interval 1882–2419 is interaction with condensed chromosomes in telophase; it reads DAFVAADSEK…RWRSPAHENS (538 aa). 2 disordered regions span residues 1890-1914 and 1929-1983; these read EKST…ECEA and FNSG…AQMS. Phosphoserine occurs at positions 1931, 2094, 2109, 2121, 2125, 2144, 2153, 2208, 2287, 2341, 2413, and 2419. The tract at residues 2119–2394 is interaction with ERCC6; sequence VWSPLASPST…TGSQLFEMHE (276 aa). The tract at residues 2182-2212 is disordered; that stretch reads SPIIKSVKTSPTSHSKHNTTSAKGFLSPGSQ. Residues 2189 to 2212 show a composition bias toward polar residues; the sequence is KTSPTSHSKHNTTSAKGFLSPGSQ.

This sequence belongs to the RIF1 family. As to quaternary structure, interacts with TP53BP1 (when phosphorylated by ATM). May interact with TRF2. Interacts with SHLD2. Interacts with ERCC6 (via WHD region). Interacts with ASTE1. In terms of tissue distribution, expressed in Sertoli cells, prospermatagonia, early primary spermatocytes, and in oocytes at all stages of their growth. Expressed in embryonic stem (ES) and embryonic germ (EG) cells: expression is lost upon differentiation.

The protein localises to the nucleus. Its subcellular location is the chromosome. It localises to the telomere. The protein resides in the cytoplasm. It is found in the cytoskeleton. The protein localises to the spindle. In terms of biological role, key regulator of TP53BP1 that plays a key role in the repair of double-strand DNA breaks (DSBs) in response to DNA damage: acts by promoting non-homologous end joining (NHEJ)-mediated repair of DSBs. In response to DNA damage, interacts with ATM-phosphorylated TP53BP1. Interaction with TP53BP1 leads to dissociate the interaction between NUDT16L1/TIRR and TP53BP1, thereby unmasking the tandem Tudor-like domain of TP53BP1 and allowing recruitment to DNA DSBs. Once recruited to DSBs, RIF1 and TP53BP1 act by promoting NHEJ-mediated repair of DSBs. In the same time, RIF1 and TP53BP1 specifically counteract the function of BRCA1 by blocking DSBs resection via homologous recombination (HR) during G1 phase. Also required for immunoglobulin class-switch recombination (CSR) during antibody genesis, a process that involves the generation of DNA DSBs. Promotes NHEJ of dysfunctional telomeres. The sequence is that of Telomere-associated protein RIF1 from Mus musculus (Mouse).